Reading from the N-terminus, the 365-residue chain is MELPLSQATLRHTLLLLPALLSSGQGELAPQIDGQTWAERALRENEHHAFTCRVAGGSATPRLAWYLDGQLQEATTSRLLSVGGDAFSGGTSTFTVTAQRSQHELNCSLQDPGSGRPANASVILNVQFKPEIAQVGAKYQEAQGPGLLVVLFALVRANPPANVTWIDQDGPVTVNASDFLVLDAQNYPWLTNHTVQLQLRSLAHNLSVVATNDVGVTSASLPAPGLLATRIEVPLLGIVVAGGLALGTLVGFSTLVACLVCRKEKKTKGPSRRPSLISSDSNNLKLNNVRLPRENMSLPSNLQLNDLTPDLRGKATERPMAQHSSRPELLEAEPGGLLTSRGFIRLPMLGYIYRVSSVSSDEIWL.

An N-terminal signal peptide occupies residues 1-26 (MELPLSQATLRHTLLLLPALLSSGQG). Topologically, residues 27–232 (ELAPQIDGQT…APGLLATRIE (206 aa)) are extracellular. Residues 30-123 (PQIDGQTWAE…SGRPANASVI (94 aa)) enclose the Ig-like domain. Cys-52 and Cys-107 are disulfide-bonded. Residues Asn-106, Asn-162, Asn-192, and Asn-205 are each glycosylated (N-linked (GlcNAc...) asparagine). A helical transmembrane segment spans residues 233-253 (VPLLGIVVAGGLALGTLVGFS). The Cytoplasmic segment spans residues 254–365 (TLVACLVCRK…SSVSSDEIWL (112 aa)).

Interacts with GRIN2B. In terms of tissue distribution, expressed throughout the brain with higher levels within the hippocampus.

The protein resides in the late endosome. It localises to the lysosome. Its subcellular location is the cell membrane. It is found in the secreted. Functionally, in neurons, modulates the degradation of NMDA receptor GRIN2B subunit. Plays a role in the regulation of neuronal excitability. The sequence is that of Transmembrane protein 25 from Mus musculus (Mouse).